Reading from the N-terminus, the 284-residue chain is MKKLTTLLLASTLLIAACGNDDSKKDDSKTSKKDDGVKAELKQATKAYDKYTDEQLNEFLKGTEKFVKAIENNDMAQAKALYPKVRMYYERSEPVAEAFGDLDPKIDARLADMKEEKKEKEWSGYHKIEKALYEDKKIDDVTKKDAQQLLKDAKELHAKADTLDITPKLMLQGSVDLLNEVATSKITGEEEIYSHTDLYDFKANIEGAQKIYDLFKPILEKKDKKLSDDIQMNFDKVNQLLDKYKDNNGGYESFEKVSKKDRKAFADAVNALGEPLSKMAVITE.

Residues M1–A17 form the signal peptide. Residue C18 is the site of N-palmitoyl cysteine attachment. C18 carries S-diacylglycerol cysteine lipidation.

This sequence belongs to the EfeM/EfeO family.

It localises to the cell membrane. The chain is Efem/EfeO family lipoprotein from Staphylococcus aureus (strain MSSA476).